Reading from the N-terminus, the 505-residue chain is AMP phosphorylase (505 aa).

Residues G170, 196 to 201, and T205 contribute to the AMP site; that span reads SRAITS. Residue D258 is the Proton donor of the active site. Residues S266 and K290 each contribute to the AMP site.

This sequence belongs to the thymidine/pyrimidine-nucleoside phosphorylase family. Type 2 subfamily.

It catalyses the reaction AMP + phosphate = alpha-D-ribose 1,5-bisphosphate + adenine. It carries out the reaction CMP + phosphate = cytosine + alpha-D-ribose 1,5-bisphosphate. The catalysed reaction is UMP + phosphate = alpha-D-ribose 1,5-bisphosphate + uracil. Its function is as follows. Catalyzes the conversion of AMP and phosphate to adenine and ribose 1,5-bisphosphate (R15P). Exhibits phosphorylase activity toward CMP and UMP in addition to AMP. Functions in an archaeal AMP degradation pathway, together with R15P isomerase and RubisCO. The sequence is that of AMP phosphorylase from Methanococcus maripaludis (strain C7 / ATCC BAA-1331).